We begin with the raw amino-acid sequence, 260 residues long: MNPDSDYPHLPNIKIHHPSSPRHSHHHSSSTPSAATPTPTAGARRKIGVAVDLSEESAFAVRWAVDHYIRPGDAVVILHVSPTSVLFGADWGPLPLQTPPPPSAATDPGAQPKPSQEDFDAFTSSKVADLAKPLKEAGFPHKIHIVKDHDMRERLCLETERLNLSAVIMGSRGFGAEKRGSDGKLGSVSDYCVHHCVCPVVVVRYPDDRDGPAPPGNVGATREAIVTVKSRRDDDDDDDEDHEAKIAAAASDHHEHIKDE.

The N-terminal 33 residues, 1–33 (MNPDSDYPHLPNIKIHHPSSPRHSHHHSSSTPS), are a transit peptide targeting the chloroplast. Positions 1–42 (MNPDSDYPHLPNIKIHHPSSPRHSHHHSSSTPSAATPTPTAG) are disordered. Basic residues predominate over residues 14–28 (KIHHPSSPRHSHHHS). Position 18 (P18) interacts with ATP. S20 is subject to Phosphoserine; by MAPK3 and MAPK6. Positions 29-41 (SSTPSAATPTPTA) are enriched in low complexity. V80 lines the ATP pocket. The segment at 92 to 118 (GPLPLQTPPPPSAATDPGAQPKPSQED) is disordered. ATP is bound by residues 170-179 (GSRGFGAEKR) and 187-189 (SVS). Residues 209 to 260 (RDGPAPPGNVGATREAIVTVKSRRDDDDDDDEDHEAKIAAAASDHHEHIKDE) are disordered. S230 carries the post-translational modification Phosphoserine. Basic and acidic residues predominate over residues 251 to 260 (SDHHEHIKDE).

This sequence belongs to the universal stress protein A family. Post-translationally, phosphorylated by MAPK3 and MAPK6 after pathogenic elicitation (e.g. bacterial flg22, Phytophthora infestans zoospores and xylanase).

The protein resides in the plastid. It is found in the chloroplast. The sequence is that of Universal stress protein PHOS34 from Arabidopsis thaliana (Mouse-ear cress).